The sequence spans 227 residues: Uracil-DNA glycosylase (227 aa).

Asp-65 acts as the Proton acceptor in catalysis.

This sequence belongs to the uracil-DNA glycosylase (UDG) superfamily. UNG family.

The protein resides in the cytoplasm. The catalysed reaction is Hydrolyzes single-stranded DNA or mismatched double-stranded DNA and polynucleotides, releasing free uracil.. Functionally, excises uracil residues from the DNA which can arise as a result of misincorporation of dUMP residues by DNA polymerase or due to deamination of cytosine. The protein is Uracil-DNA glycosylase of Lactobacillus delbrueckii subsp. bulgaricus (strain ATCC BAA-365 / Lb-18).